We begin with the raw amino-acid sequence, 1103 residues long: Mediator of RNA polymerase II transcription subunit 14 (1103 aa).

2 disordered regions span residues 22 to 61 (LNGVSSAPAGSSQLGNPVGLHNGSLPTNGVQHPDSRGSDE) and 1043 to 1067 (TTPKALDSRTSHDAPAANNQSPAIR). The span at 23 to 36 (NGVSSAPAGSSQLG) shows a compositional bias: polar residues.

The protein belongs to the Mediator complex subunit 14 family. In terms of assembly, component of the Mediator complex.

It localises to the nucleus. Functionally, component of the Mediator complex, a coactivator involved in the regulated transcription of nearly all RNA polymerase II-dependent genes. Mediator functions as a bridge to convey information from gene-specific regulatory proteins to the basal RNA polymerase II transcription machinery. Mediator is recruited to promoters by direct interactions with regulatory proteins and serves as a scaffold for the assembly of a functional preinitiation complex with RNA polymerase II and the general transcription factors. The protein is Mediator of RNA polymerase II transcription subunit 14 (rgr1) of Emericella nidulans (strain FGSC A4 / ATCC 38163 / CBS 112.46 / NRRL 194 / M139) (Aspergillus nidulans).